The chain runs to 319 residues: MEMIRGRGIPNGVVQVPNLSANNLLQKFFIASNHFCQRDSEHGENQQEAKKREDEAEEDEKDVELTLGLSLNGQFGTDPRSRKRRHFELGRSSSIPEGFVFDEQRSGGGNGGDMRRIVGRGGSDMFQLDRTRSLPVVTEMDIEKERKVSEKTRAFMESPVTNRGAYLTKDKNRGQAVETEKPRAFLEFKIPPTKEGKKEKDRLVVTGPVNGKGKNGNTAKKQKNNVENSGMEKARNILEDMPCVSTRDVGADGKRVEGFLYWYGGNKEEVKIVCVCHGSFLSPAEFVRHGGGTVSDDDGGDVMINPLRHIVVKLPSSSI.

The span at 39 to 54 (DSEHGENQQEAKKRED) shows a compositional bias: basic and acidic residues. Disordered regions lie at residues 39–63 (DSEHGENQQEAKKREDEAEEDEKDV), 99–120 (FVFDEQRSGGGNGGDMRRIVGR), and 205–228 (VTGPVNGKGKNGNTAKKQKNNVEN).

Belongs to the Ninja family. Interacts with ABI5/DPBF1, AREB3/DPBF3, EEL/DPBF4, ABF1 and ABF3/DPBF5. In terms of tissue distribution, predominantly expressed in roots and seedlings.

The protein localises to the nucleus. Acts as a negative regulator of abscisic acid (ABA) and salinity responses. This chain is Ninja-family protein AFP4 (AFP4), found in Arabidopsis thaliana (Mouse-ear cress).